The sequence spans 942 residues: Eukaryotic translation initiation factor 3 subunit A (942 aa).

A PCI domain is found at 320–494 (FKKYSSIILL…NTVTFFKDPF (175 aa)). 4 coiled-coil regions span residues 499 to 529 (KAAG…GEEI), 588 to 669 (ITQT…KQRE), 705 to 734 (SKLS…AYRK), and 821 to 912 (IEEV…RKAQ). The interval 502–546 (GTVEEEEEEEEEEGEEVEGEEAETGEEIVEEGEEHENEENKEPEP) is disordered. The span at 504 to 538 (VEEEEEEEEEEGEEVEGEEAETGEEIVEEGEEHEN) shows a compositional bias: acidic residues. Composition is skewed to basic and acidic residues over residues 836–870 (RKAE…ERKS) and 889–911 (RSAK…ERKA). The segment at 836 to 942 (RKAEIEAEER…KMKLRRASKK (107 aa)) is disordered.

The protein belongs to the eIF-3 subunit A family. In terms of assembly, component of the eukaryotic translation initiation factor 3 (eIF-3) complex.

Its subcellular location is the cytoplasm. Functionally, RNA-binding component of the eukaryotic translation initiation factor 3 (eIF-3) complex, which is involved in protein synthesis of a specialized repertoire of mRNAs and, together with other initiation factors, stimulates binding of mRNA and methionyl-tRNAi to the 40S ribosome. The eIF-3 complex specifically targets and initiates translation of a subset of mRNAs involved in cell proliferation. The polypeptide is Eukaryotic translation initiation factor 3 subunit A (Vanderwaltozyma polyspora (strain ATCC 22028 / DSM 70294 / BCRC 21397 / CBS 2163 / NBRC 10782 / NRRL Y-8283 / UCD 57-17) (Kluyveromyces polysporus)).